The sequence spans 347 residues: 2-hydroxyacid dehydrogenase A (347 aa).

Residues 157–158 (RI), Asp-177, 234–236 (TSR), and Asp-260 each bind NAD(+). The active site involves Arg-236. Residue Glu-265 is part of the active site.

Belongs to the D-isomer specific 2-hydroxyacid dehydrogenase family.

The catalysed reaction is a (2R)-2-hydroxycarboxylate + NADP(+) = a 2-oxocarboxylate + NADPH + H(+). 2-hydroxyacid dehydrogenase that is capable to reduce pyruvate, hydroxypyruvate and glyoxylate in a NADPH- or NADH-dependent manner. In contrast to 2-HadhD/morA, does not recognize 4-methyl-2-oxopentanoate (MOA) as a substrate. The sequence is that of 2-hydroxyacid dehydrogenase A from Aspergillus oryzae (strain ATCC 42149 / RIB 40) (Yellow koji mold).